A 422-amino-acid chain; its full sequence is Receptor homology region, transmembrane domain- and RING domain-containing protein 3 (422 aa).

Residues 1-22 (MNLVVLLILTLLLFIVSYVVDA) form the signal peptide. Residues 23-168 (GQVILVDSNI…NTEDSVWSLY (146 aa)) are Lumenal-facing. N31 carries N-linked (GlcNAc...) asparagine glycosylation. C64 and C89 are disulfide-bonded. Residues 81 to 146 (LVLIIRGGCS…RAGEMLKKYA (66 aa)) form the PA domain. The chain crosses the membrane as a helical span at residues 169–189 (ASIALILSLAIFCVMVTCVFF). The Cytoplasmic portion of the chain corresponds to 190–422 (YRYCSTIRNS…HFASAHSLPD (233 aa)). The RING-type; atypical zinc finger occupies 232-274 (CAICLEDYIVGDKLRVLPCSHKFHVACVDSWLISWRTFCPVCK). Positions 344–368 (LRRQASPLQSSSQRSHLSMKSSHSL) are disordered. Polar residues predominate over residues 349–368 (SPLQSSSQRSHLSMKSSHSL).

It is found in the prevacuolar compartment membrane. The protein localises to the protein storage vacuole membrane. In terms of biological role, involved in the trafficking of vacuolar proteins. May function as a sorting receptor for protein trafficking to the protein storage vacuole (PSV). The sequence is that of Receptor homology region, transmembrane domain- and RING domain-containing protein 3 (RMR3) from Arabidopsis thaliana (Mouse-ear cress).